Reading from the N-terminus, the 101-residue chain is Urease subunit beta (101 aa).

Belongs to the urease beta subunit family. As to quaternary structure, heterotrimer of UreA (gamma), UreB (beta) and UreC (alpha) subunits. Three heterotrimers associate to form the active enzyme.

The protein localises to the cytoplasm. It catalyses the reaction urea + 2 H2O + H(+) = hydrogencarbonate + 2 NH4(+). Its pathway is nitrogen metabolism; urea degradation; CO(2) and NH(3) from urea (urease route): step 1/1. The sequence is that of Urease subunit beta from Leptothrix cholodnii (strain ATCC 51168 / LMG 8142 / SP-6) (Leptothrix discophora (strain SP-6)).